The following is a 490-amino-acid chain: Cobyric acid synthase (490 aa).

Residues 251 to 444 (GLTIAVIHLP…LHGIFANDAF (194 aa)) form the GATase cobBQ-type domain. Catalysis depends on Cys329, which acts as the Nucleophile. The active site involves His436.

This sequence belongs to the CobB/CobQ family. CobQ subfamily.

It participates in cofactor biosynthesis; adenosylcobalamin biosynthesis. Catalyzes amidations at positions B, D, E, and G on adenosylcobyrinic A,C-diamide. NH(2) groups are provided by glutamine, and one molecule of ATP is hydrogenolyzed for each amidation. This chain is Cobyric acid synthase, found in Roseiflexus castenholzii (strain DSM 13941 / HLO8).